The following is a 150-amino-acid chain: Ribosomal RNA large subunit methyltransferase H (150 aa).

Residues alanine 100 and 118 to 123 (LSEMTF) each bind S-adenosyl-L-methionine.

Belongs to the RNA methyltransferase RlmH family. As to quaternary structure, homodimer.

The protein resides in the cytoplasm. The enzyme catalyses pseudouridine(1915) in 23S rRNA + S-adenosyl-L-methionine = N(3)-methylpseudouridine(1915) in 23S rRNA + S-adenosyl-L-homocysteine + H(+). Functionally, specifically methylates the pseudouridine at position 1915 (m3Psi1915) in 23S rRNA. This Helicobacter pylori (strain J99 / ATCC 700824) (Campylobacter pylori J99) protein is Ribosomal RNA large subunit methyltransferase H.